We begin with the raw amino-acid sequence, 210 residues long: Prolactin (210 aa).

The N-terminal stretch at 1-23 (MARRSQGTKLHLAVLCLVVSCHA) is a signal peptide. 2 cysteine pairs are disulfide-bonded: C69–C183 and C200–C210.

It belongs to the somatotropin/prolactin family. As to expression, pituitary gland.

It localises to the secreted. This is Prolactin (prl) from Coregonus autumnalis (Arctic cisco).